A 187-amino-acid polypeptide reads, in one-letter code: Elongation factor P (187 aa).

This sequence belongs to the elongation factor P family.

It localises to the cytoplasm. It participates in protein biosynthesis; polypeptide chain elongation. Functionally, involved in peptide bond synthesis. Stimulates efficient translation and peptide-bond synthesis on native or reconstituted 70S ribosomes in vitro. Probably functions indirectly by altering the affinity of the ribosome for aminoacyl-tRNA, thus increasing their reactivity as acceptors for peptidyl transferase. The sequence is that of Elongation factor P from Rhodococcus erythropolis (strain PR4 / NBRC 100887).